The following is a 695-amino-acid chain: Nucleoprotein (695 aa).

Coiled-coil stretches lie at residues 316-341 (VNVGEQYQQLREAAHDAEIKLQRRHE) and 372-399 (QTLAVLSQKREKLARLAAEIENNIVEDQ). Disordered stretches follow at residues 423–458 (VQARPINRPTALPPPVDNKIEHESTEDSSSSSSFVD), 483–515 (TSREFQGIPAPPRQSQDLNNSQGKQEDESTNPI), and 527–612 (PVQE…DTRA). 2 stretches are compositionally biased toward polar residues: residues 495–505 (RQSQDLNNSQG) and 537–552 (TTDSQESIDQPGSDNE). The PTAP/PSAP motif motif lies at 603-606 (PSAP).

It belongs to the filoviruses nucleoprotein family. In terms of assembly, homooligomer. Homomultimerizes to form the nucleocapsid. Binds to viral genomic RNA. Interacts with VP35 and VP30 to form the nucleocapsid. Also interacts with VP24 and VP40. Post-translationally, phosphorylated.

It is found in the virion. Its subcellular location is the host cytoplasm. In terms of biological role, encapsidates the genome, protecting it from nucleases. The encapsidated genomic RNA is termed the nucleocapsid and serves as template for transcription and replication. During replication, encapsidation by NP is coupled to RNA synthesis and all replicative products are resistant to nucleases. This Chlorocebus aethiops (Green monkey) protein is Nucleoprotein (NP).